A 173-amino-acid polypeptide reads, in one-letter code: Trafficking regulator of GLUT4 1 (173 aa).

The span at 1–17 (MANPVQPQLQDPGSTSP) shows a compositional bias: polar residues. Residues 1–22 (MANPVQPQLQDPGSTSPLDLPE) form a disordered region. At 1 to 102 (MANPVQPQLQ…QDQEAPKDYL (102 aa)) the chain is on the cytoplasmic side. 6 positions are modified to phosphoserine: serine 16, serine 43, serine 45, serine 70, serine 84, and serine 85. An intramembrane region (helical) is located at residues 103–123 (VLAIASCFCPVWPLNLIPLIF). Residues 124–150 (SIMSRSSVQQGDLDGARRLGRLARLLS) are Cytoplasmic-facing. A helical membrane pass occupies residues 151 to 171 (ITFIILGIVIIIVAVTVNFTV). The Extracellular segment spans residues 172–173 (PK).

The protein belongs to the CD225/Dispanin family. Interacts with SLC2A4; the interaction is required for proper SLC2A4 reacycling after insulin stimulation. Present in adipose tissue and undetectable in other tissues (at protein level).

It is found in the cell membrane. The protein localises to the endomembrane system. The protein resides in the cytoplasm. Its subcellular location is the perinuclear region. Regulates insulin-mediated adipose tissue glucose uptake and transport by modulation of SLC2A4 recycling. Not required for SLC2A4 membrane fusion upon an initial stimulus, but rather is necessary for proper protein recycling during prolonged insulin stimulation. In Rattus norvegicus (Rat), this protein is Trafficking regulator of GLUT4 1.